Consider the following 289-residue polypeptide: 2-hydroxy-6-oxononadienedioate/2-hydroxy-6-oxononatrienedioate hydrolase (289 aa).

Residues 39 to 275 (TVVMLHGSGP…RCGHWAQWEH (237 aa)) enclose the AB hydrolase-1 domain. The active-site Proton acceptor is histidine 269.

It belongs to the AB hydrolase superfamily. MhpC family. In terms of assembly, homodimer.

The catalysed reaction is (2Z,4E)-2-hydroxy-6-oxonona-2,4-dienedioate + H2O = (2Z)-2-hydroxypenta-2,4-dienoate + succinate + H(+). The enzyme catalyses (2Z,4E,7E)-2-hydroxy-6-oxonona-2,4,7-trienedioate + H2O = (2Z)-2-hydroxypenta-2,4-dienoate + fumarate + H(+). It functions in the pathway aromatic compound metabolism; 3-phenylpropanoate degradation. In terms of biological role, catalyzes the cleavage of the C5-C6 bond of 2-hydroxy-6-oxononadienedioate and 2-hydroxy-6-oxononatrienedioate, a dienol ring fission product of the bacterial meta-cleavage pathway for degradation of phenylpropionic acid. The protein is 2-hydroxy-6-oxononadienedioate/2-hydroxy-6-oxononatrienedioate hydrolase of Paraburkholderia xenovorans (strain LB400).